The following is a 94-amino-acid chain: Co-chaperonin GroES (94 aa).

Belongs to the GroES chaperonin family. In terms of assembly, heptamer of 7 subunits arranged in a ring. Interacts with the chaperonin GroEL.

The protein resides in the cytoplasm. Functionally, together with the chaperonin GroEL, plays an essential role in assisting protein folding. The GroEL-GroES system forms a nano-cage that allows encapsulation of the non-native substrate proteins and provides a physical environment optimized to promote and accelerate protein folding. GroES binds to the apical surface of the GroEL ring, thereby capping the opening of the GroEL channel. This chain is Co-chaperonin GroES, found in Halalkalibacterium halodurans (strain ATCC BAA-125 / DSM 18197 / FERM 7344 / JCM 9153 / C-125) (Bacillus halodurans).